A 143-amino-acid polypeptide reads, in one-letter code: Large ribosomal subunit protein uL11 (143 aa).

Belongs to the universal ribosomal protein uL11 family. Part of the ribosomal stalk of the 50S ribosomal subunit. Interacts with L10 and the large rRNA to form the base of the stalk. L10 forms an elongated spine to which L12 dimers bind in a sequential fashion forming a multimeric L10(L12)X complex. In terms of processing, one or more lysine residues are methylated.

In terms of biological role, forms part of the ribosomal stalk which helps the ribosome interact with GTP-bound translation factors. The polypeptide is Large ribosomal subunit protein uL11 (Rhizobium etli (strain CIAT 652)).